We begin with the raw amino-acid sequence, 390 residues long: GLH-binding kinase 1 (390 aa).

Residues 38 to 338 (YVNLSFLNAG…VEDALNHPYV (301 aa)) form the Protein kinase domain. ATP contacts are provided by residues 44–52 (LNAGAQGTV) and lysine 67. The active-site Proton acceptor is aspartate 164. Residue serine 198 is modified to Phosphoserine. Tyrosine 200 is subject to Phosphotyrosine.

The protein belongs to the protein kinase superfamily. CMGC Ser/Thr protein kinase family. MAP kinase subfamily. Interacts with glh-1, glh-2 (via C-terminus), glh-3 (via C-terminus) and glh-4 (via C-terminus). Interacts with csn-5; the interaction may prevent glh-1 degradation induced by kgb-1. Interacts with fos-1. Mg(2+) serves as cofactor. May be phosphorylated by mek-1 on Ser-198 and/or Tyr-200. Phosphorylation is induced upon Cu(2+) and arsenite-mediated cell stimulation and by fasting. In terms of tissue distribution, expressed in somatic and germline tissues.

It is found in the cytoplasm. It carries out the reaction L-seryl-[protein] + ATP = O-phospho-L-seryl-[protein] + ADP + H(+). The catalysed reaction is L-threonyl-[protein] + ATP = O-phospho-L-threonyl-[protein] + ADP + H(+). With respect to regulation, activated by mek-1 mediated phosphorylation. No differences in basal activation between larvae and adults. Inhibited by phosphatase vhp-1. Functionally, mitogen-activated protein kinase which is an essential component of the JNK pathway composed of mlk-1, mek-1 and kgb-1. Phosphorylates the transcription factor fos-1 which prevents fos-1 dimerization and promoter binding and results in activation of target genes including F53A9.2/kreg-1 and lys-3/kreg-2. Phosphorylates jun-1 and activates the AP-1 transcription factor which is a heterodimer of jun-1 and fos-1. Phosphorylates glh-1 in vitro which may play a role in controlling glh-1 protein levels in the germline by targeting it for degradation by the proteasome. Required for oogenesis and probably also for spermatogenesis. Involved in the response to environmental stress such as heavy metals, infection and protein folding stress in an age-dependent manner. In larvae, has a protective role which becomes detrimental in adults. May control susceptibility to infection, heavy metal stress and premature lethality by regulating daf-16 cellular localization. Involved in the transcriptional response to bacterial pore-forming toxins and to fasting. Required for fasting-induced longevity. Involved in axon regeneration after injury downstream of tyrosine receptor svh-2. This chain is GLH-binding kinase 1, found in Caenorhabditis elegans.